We begin with the raw amino-acid sequence, 403 residues long: Nucleolar protein 13 (403 aa).

Basic and acidic residues-rich tracts occupy residues 1–35 (MSETELSKEDAVTKKDNEEQVKKALLDPTKKRKAE) and 75–97 (KSIEEYKEDAEKKKSGASEKDAQ). Disordered stretches follow at residues 1–43 (MSET…IDLK) and 72–116 (IDPK…EVVK). S2 bears the N-acetylserine mark. Phosphoserine is present on S2. A compositionally biased stretch (polar residues) spans 99-108 (EESTINTPTG). T105 is modified (phosphothreonine). RRM domains lie at 125–219 (YGVW…DSEN) and 239–317 (RILF…YGED). Over residues 313–329 (EYGEDRSKRQVRKKVEN) the composition is skewed to basic and acidic residues. The tract at residues 313 to 403 (EYGEDRSKRQ…PSQGKKVKFD (91 aa)) is disordered. A compositionally biased stretch (polar residues) spans 330 to 344 (VSRNNSSSFDISNNK). S335 carries the post-translational modification Phosphoserine. Over residues 345–361 (GYDRAGQDNGSKPEYKR) the composition is skewed to basic and acidic residues. Over residues 371-381 (DSNNRTKSSVA) the composition is skewed to polar residues.

It localises to the nucleus. The protein localises to the nucleolus. The polypeptide is Nucleolar protein 13 (NOP13) (Saccharomyces cerevisiae (strain ATCC 204508 / S288c) (Baker's yeast)).